A 154-amino-acid chain; its full sequence is Ribonuclease K6 (154 aa).

An N-terminal signal peptide occupies residues 1 to 27 (MGPHLLGRSSLLLLLLGMWWSVRPLCA). Histidine 42 (proton acceptor) is an active-site residue. Disulfide bonds link cysteine 50–cysteine 108, cysteine 64–cysteine 118, cysteine 82–cysteine 133, and cysteine 89–cysteine 96. Asparagine 59 is a glycosylation site (N-linked (GlcNAc...) asparagine). Substrate is bound by residues 65–69 (KPENT) and lysine 90. The N-linked (GlcNAc...) asparagine glycan is linked to asparagine 104. Histidine 149 acts as the Proton donor in catalysis.

This sequence belongs to the pancreatic ribonuclease family. In terms of assembly, interacts (via N-terminus) with bacterial lipopolysaccharide (LPS). As to expression, kidney (at protein level).

Its subcellular location is the secreted. The protein resides in the lysosome. It localises to the cytoplasmic granule. Ribonuclease which shows a preference for the pyrimidines uridine and cytosine. Has potent antimicrobial activity against a range of Gram-positive and Gram-negative bacteria, including P.aeruginosa, A.baumanii, M.luteus, S.aureus, E.faecalis, E.faecium, S.saprophyticus and E.coli. Causes loss of bacterial membrane integrity, and also promotes agglutination of Gram-negative bacteria. Probably contributes to urinary tract sterility. Bactericidal activity is independent of RNase activity. The chain is Ribonuclease K6 (RNASE6) from Bos taurus (Bovine).